Consider the following 416-residue polypeptide: Lysosome-associated membrane glycoprotein 3 (416 aa).

The first 27 residues, Met-1–Ala-27, serve as a signal peptide directing secretion. The Lumenal segment spans residues Lys-28 to Thr-381. Residues Asn-112, Asn-158, Asn-164, Asn-200, Asn-232, Asn-266, and Asn-291 are each glycosylated (N-linked (GlcNAc...) asparagine). 2 disordered regions span residues Pro-136–Thr-167 and Ser-179–Gln-219. The segment covering His-143 to Thr-160 has biased composition (low complexity). Residues Pro-188 to Ala-208 show a composition bias toward low complexity. A disulfide bridge connects residues Cys-237 and Cys-274. Cys-339 and Cys-376 are disulfide-bonded. Residues Ile-382–Tyr-402 form a helical membrane-spanning segment. The Cytoplasmic portion of the chain corresponds to Lys-403–Ile-416.

Belongs to the LAMP family. As to quaternary structure, monomer. Interacts with FURIN. (Microbial infection) Interacts with mumps virus protein F; this interaction promotes protein F cleavage by FURIN. As to expression, detected in tonsil interdigitating dendritic cells, in spleen, lymph node, Peyer's patches in the small instestine, in thymus medulla and in B-cells (at protein level). Expressed in lymphoid organs and dendritic cells. Expressed in lung. Up-regulated in carcinomas of the esophagus, colon, rectum, ureter, stomach, breast, fallopian tube, thyroid and parotid tissues.

The protein resides in the cell surface. It localises to the lysosome membrane. The protein localises to the cytoplasmic vesicle membrane. It is found in the early endosome membrane. Lysosomal membrane glycoprotein which plays a role in the unfolded protein response (UPR) that contributes to protein degradation and cell survival during proteasomal dysfunction. Plays a role in the process of fusion of the lysosome with the autophagosome, thereby modulating the autophagic process. Promotes hepatocellular lipogenesis through activation of the PI3K/Akt pathway. May also play a role in dendritic cell function and in adaptive immunity. Its function is as follows. (Microbial infection) Plays a positive role in post-entry steps of influenza A virus replication, either virus uncoating, cytosolic transport, or nuclear import of viral components, and promotes nuclear accumulation of influenza nucleoprotein/NP at early stages of viral infection. In terms of biological role, (Microbial infection) Supports the FURIN-mediated cleavage of mumps virus fusion protein F by interacting with both FURIN and the unprocessed form but not the processed form of the viral protein F. Functionally, (Microbial infection) Promotes the intracellular proliferation of Salmonella typhimuium. This Homo sapiens (Human) protein is Lysosome-associated membrane glycoprotein 3 (LAMP3).